The chain runs to 374 residues: Alcohol dehydrogenase class-3 (374 aa).

N-acetylalanine is present on Ala-2. Zn(2+) contacts are provided by Cys-45, His-67, Cys-97, Cys-100, Cys-103, Cys-111, and Cys-174. Lys-233 carries the post-translational modification N6-succinyllysine. The residue at position 247 (Ser-247) is a Phosphoserine. Lys-315 bears the N6-succinyllysine mark. Phosphoserine is present on residues Ser-324 and Ser-351.

Belongs to the zinc-containing alcohol dehydrogenase family. Class-III subfamily. Homodimer. It depends on Zn(2+) as a cofactor.

It is found in the cytoplasm. The enzyme catalyses a primary alcohol + NAD(+) = an aldehyde + NADH + H(+). The catalysed reaction is a secondary alcohol + NAD(+) = a ketone + NADH + H(+). It catalyses the reaction S-(hydroxymethyl)glutathione + NADP(+) = S-formylglutathione + NADPH + H(+). It carries out the reaction S-(hydroxymethyl)glutathione + NAD(+) = S-formylglutathione + NADH + H(+). The enzyme catalyses 20-oxo-(5Z,8Z,11Z,14Z)-eicosatetraenoate + NAD(+) + H2O = (5Z,8Z,11Z,14Z)-eicosatetraenedioate + NADH + 2 H(+). The catalysed reaction is 20-hydroxy-(5Z,8Z,11Z,14Z)-eicosatetraenoate + NAD(+) = 20-oxo-(5Z,8Z,11Z,14Z)-eicosatetraenoate + NADH + H(+). It catalyses the reaction S-nitrosoglutathione + NADH + H(+) = S-(hydroxysulfenamide)glutathione + NAD(+). In terms of biological role, catalyzes the oxidation of long-chain primary alcohols and the oxidation of S-(hydroxymethyl) glutathione. Also oxidizes long chain omega-hydroxy fatty acids, such as 20-HETE, producing both the intermediate aldehyde, 20-oxoarachidonate and the end product, a dicarboxylic acid, (5Z,8Z,11Z,14Z)-eicosatetraenedioate. Class-III ADH is remarkably ineffective in oxidizing ethanol. Required for clearance of cellular formaldehyde, a cytotoxic and carcinogenic metabolite that induces DNA damage. Also acts as a S-nitroso-glutathione reductase by catalyzing the NADH-dependent reduction of S-nitrosoglutathione, thereby regulating protein S-nitrosylation. This is Alcohol dehydrogenase class-3 from Homo sapiens (Human).